A 391-amino-acid polypeptide reads, in one-letter code: Polyketide synthase 1 (391 aa).

C164 is an active-site residue.

This sequence belongs to the thiolase-like superfamily. Chalcone/stilbene synthases family. In terms of assembly, homodimer. In terms of tissue distribution, expressed in fruits.

It carries out the reaction (E)-4-coumaroyl-CoA + 3 malonyl-CoA + 3 H(+) = 2',4,4',6'-tetrahydroxychalcone + 3 CO2 + 4 CoA. Its pathway is secondary metabolite biosynthesis; flavonoid biosynthesis. Functionally, polyketide synthase producing naringenin chalcone and slightly p-coumaryltriacetic acid lactone (CTAL). Can use p-coumaryl-CoA as substrate. In Rubus idaeus (Raspberry), this protein is Polyketide synthase 1 (PKS1).